Reading from the N-terminus, the 422-residue chain is Serine hydroxymethyltransferase (422 aa).

(6S)-5,6,7,8-tetrahydrofolate contacts are provided by residues leucine 118 and 122–124 (GHL). Lysine 227 is modified (N6-(pyridoxal phosphate)lysine). (6S)-5,6,7,8-tetrahydrofolate-binding positions include glutamate 243 and 351–353 (SPF).

Belongs to the SHMT family. In terms of assembly, homodimer. Pyridoxal 5'-phosphate is required as a cofactor.

The protein localises to the cytoplasm. The enzyme catalyses (6R)-5,10-methylene-5,6,7,8-tetrahydrofolate + glycine + H2O = (6S)-5,6,7,8-tetrahydrofolate + L-serine. It participates in one-carbon metabolism; tetrahydrofolate interconversion. Its pathway is amino-acid biosynthesis; glycine biosynthesis; glycine from L-serine: step 1/1. Its function is as follows. Catalyzes the reversible interconversion of serine and glycine with tetrahydrofolate (THF) serving as the one-carbon carrier. This reaction serves as the major source of one-carbon groups required for the biosynthesis of purines, thymidylate, methionine, and other important biomolecules. Also exhibits THF-independent aldolase activity toward beta-hydroxyamino acids, producing glycine and aldehydes, via a retro-aldol mechanism. This chain is Serine hydroxymethyltransferase, found in Fervidobacterium nodosum (strain ATCC 35602 / DSM 5306 / Rt17-B1).